The following is a 476-amino-acid chain: Homeobox protein invected (476 aa).

Disordered regions lie at residues 1 to 43 (MAAV…SEDI), 273 to 331 (KTRY…TSGD), and 347 to 381 (DRPSSGRSPRTRRPKKPPGDTASNDEKRPRTAFSG). Residues 23-32 (SPNTRDTTSP) show a composition bias toward polar residues. Composition is skewed to basic and acidic residues over residues 33–43 (ECHDDEKSEDI) and 292–305 (KLDEARVPDIKTPD). The segment covering 318 to 331 (GSNSGSTSGATSGD) has biased composition (low complexity). Residues 372–431 (EKRPRTAFSGPQLARLKHEFAENRYLTERRRQSLAAELGLAEAQIKIWFQNKRAKIKKAS) constitute a DNA-binding region (homeobox).

The protein belongs to the engrailed homeobox family. Expressed in the middle silk gland but not in the posterior silk gland during the fourth molt/fifth intermolt period.

The protein localises to the nucleus. Functionally, this protein might be involved in the compartmentalization of the silk gland. In Bombyx mori (Silk moth), this protein is Homeobox protein invected (INV).